The sequence spans 38 residues: Cytochrome b6-f complex subunit 5 (38 aa).

A helical membrane pass occupies residues Leu5 to Ala25.

Belongs to the PetG family. In terms of assembly, the 4 large subunits of the cytochrome b6-f complex are cytochrome b6, subunit IV (17 kDa polypeptide, PetD), cytochrome f and the Rieske protein, while the 4 small subunits are PetG, PetL, PetM and PetN. The complex functions as a dimer.

It is found in the cellular thylakoid membrane. Its function is as follows. Component of the cytochrome b6-f complex, which mediates electron transfer between photosystem II (PSII) and photosystem I (PSI), cyclic electron flow around PSI, and state transitions. PetG is required for either the stability or assembly of the cytochrome b6-f complex. The polypeptide is Cytochrome b6-f complex subunit 5 (Parasynechococcus marenigrum (strain WH8102)).